The primary structure comprises 496 residues: Acetyl-coenzyme A carboxylase carboxyl transferase subunit beta, chloroplastic (496 aa).

One can recognise a CoA carboxyltransferase N-terminal domain in the interval 229–496; it reads LWVQCENCYG…FFPLNKNFIK (268 aa). 4 residues coordinate Zn(2+): cysteine 233, cysteine 236, cysteine 252, and cysteine 255. Residues 233 to 255 form a C4-type zinc finger; the sequence is CENCYGLNYKKFFRLKLHICEQC.

It belongs to the AccD/PCCB family. As to quaternary structure, acetyl-CoA carboxylase is a heterohexamer composed of biotin carboxyl carrier protein, biotin carboxylase and 2 subunits each of ACCase subunit alpha and ACCase plastid-coded subunit beta (accD). Requires Zn(2+) as cofactor.

It is found in the plastid. It localises to the chloroplast stroma. It carries out the reaction N(6)-carboxybiotinyl-L-lysyl-[protein] + acetyl-CoA = N(6)-biotinyl-L-lysyl-[protein] + malonyl-CoA. The protein operates within lipid metabolism; malonyl-CoA biosynthesis; malonyl-CoA from acetyl-CoA: step 1/1. Its function is as follows. Component of the acetyl coenzyme A carboxylase (ACC) complex. Biotin carboxylase (BC) catalyzes the carboxylation of biotin on its carrier protein (BCCP) and then the CO(2) group is transferred by the transcarboxylase to acetyl-CoA to form malonyl-CoA. The chain is Acetyl-coenzyme A carboxylase carboxyl transferase subunit beta, chloroplastic from Ranunculus macranthus (Large buttercup).